A 93-amino-acid polypeptide reads, in one-letter code: Putative pterin-4-alpha-carbinolamine dehydratase (93 aa).

This sequence belongs to the pterin-4-alpha-carbinolamine dehydratase family.

It carries out the reaction (4aS,6R)-4a-hydroxy-L-erythro-5,6,7,8-tetrahydrobiopterin = (6R)-L-erythro-6,7-dihydrobiopterin + H2O. The polypeptide is Putative pterin-4-alpha-carbinolamine dehydratase (Roseiflexus sp. (strain RS-1)).